Reading from the N-terminus, the 212-residue chain is Pyridoxine/pyridoxamine 5'-phosphate oxidase (212 aa).

Substrate is bound by residues 8 to 11 and Lys-66; that span reads RREY. Residues 61-66, 76-77, Arg-82, Lys-83, and Gln-105 each bind FMN; these read RIVLLK and FT. 3 residues coordinate substrate: Tyr-123, Arg-127, and Ser-131. FMN contacts are provided by residues 140-141 and Trp-185; that span reads QS. 191 to 193 serves as a coordination point for substrate; the sequence is RLH. Position 195 (Arg-195) interacts with FMN.

The protein belongs to the pyridoxamine 5'-phosphate oxidase family. Homodimer. FMN serves as cofactor.

It catalyses the reaction pyridoxamine 5'-phosphate + O2 + H2O = pyridoxal 5'-phosphate + H2O2 + NH4(+). The enzyme catalyses pyridoxine 5'-phosphate + O2 = pyridoxal 5'-phosphate + H2O2. Its pathway is cofactor metabolism; pyridoxal 5'-phosphate salvage; pyridoxal 5'-phosphate from pyridoxamine 5'-phosphate: step 1/1. The protein operates within cofactor metabolism; pyridoxal 5'-phosphate salvage; pyridoxal 5'-phosphate from pyridoxine 5'-phosphate: step 1/1. Functionally, catalyzes the oxidation of either pyridoxine 5'-phosphate (PNP) or pyridoxamine 5'-phosphate (PMP) into pyridoxal 5'-phosphate (PLP). This Shewanella sp. (strain MR-7) protein is Pyridoxine/pyridoxamine 5'-phosphate oxidase.